Reading from the N-terminus, the 131-residue chain is Profilin-11 (131 aa).

C13 and C115 are joined by a disulfide. Positions 81 to 97 (AVIRGKKGSGGITVKKT) match the Involved in PIP2 interaction motif. Phosphothreonine is present on T111.

It belongs to the profilin family. As to quaternary structure, occurs in many kinds of cells as a complex with monomeric actin in a 1:1 ratio. In terms of processing, phosphorylated by MAP kinases.

Its subcellular location is the cytoplasm. It localises to the cytoskeleton. In terms of biological role, binds to actin and affects the structure of the cytoskeleton. At high concentrations, profilin prevents the polymerization of actin, whereas it enhances it at low concentrations. This is Profilin-11 from Zea mays (Maize).